The following is a 428-amino-acid chain: Tryptophan synthase beta chain (428 aa).

An N6-(pyridoxal phosphate)lysine modification is found at Lys-100.

It belongs to the TrpB family. Tetramer of two alpha and two beta chains. The cofactor is pyridoxal 5'-phosphate.

The catalysed reaction is (1S,2R)-1-C-(indol-3-yl)glycerol 3-phosphate + L-serine = D-glyceraldehyde 3-phosphate + L-tryptophan + H2O. The protein operates within amino-acid biosynthesis; L-tryptophan biosynthesis; L-tryptophan from chorismate: step 5/5. The beta subunit is responsible for the synthesis of L-tryptophan from indole and L-serine. This is Tryptophan synthase beta chain from Streptomyces griseus subsp. griseus (strain JCM 4626 / CBS 651.72 / NBRC 13350 / KCC S-0626 / ISP 5235).